A 252-amino-acid polypeptide reads, in one-letter code: Phosphate import ATP-binding protein PstB (252 aa).

In terms of domain architecture, ABC transporter spans 6–247 (ISAENLNLFY…PKDQRTEDYI (242 aa)). 38–45 (GPSGCGKS) lines the ATP pocket.

The protein belongs to the ABC transporter superfamily. Phosphate importer (TC 3.A.1.7) family. In terms of assembly, the complex is composed of two ATP-binding proteins (PstB), two transmembrane proteins (PstC and PstA) and a solute-binding protein (PstS).

The protein resides in the cell membrane. The enzyme catalyses phosphate(out) + ATP + H2O = ADP + 2 phosphate(in) + H(+). In terms of biological role, part of the ABC transporter complex PstSACB involved in phosphate import. Responsible for energy coupling to the transport system. The protein is Phosphate import ATP-binding protein PstB of Heliobacterium mobile (Heliobacillus mobilis).